The primary structure comprises 173 residues: Large ribosomal subunit protein uL10 (173 aa).

This sequence belongs to the universal ribosomal protein uL10 family. Part of the ribosomal stalk of the 50S ribosomal subunit. The N-terminus interacts with L11 and the large rRNA to form the base of the stalk. The C-terminus forms an elongated spine to which L12 dimers bind in a sequential fashion forming a multimeric L10(L12)X complex.

Its function is as follows. Forms part of the ribosomal stalk, playing a central role in the interaction of the ribosome with GTP-bound translation factors. This chain is Large ribosomal subunit protein uL10 (rplJ), found in Synechocystis sp. (strain ATCC 27184 / PCC 6803 / Kazusa).